The following is a 216-amino-acid chain: Uracil phosphoribosyltransferase (216 aa).

5-phospho-alpha-D-ribose 1-diphosphate is bound by residues Arg85, Arg110, and 135 to 143 (DPMVATGYS). Uracil-binding positions include Ile200 and 205–207 (GDA). Residue Asp206 participates in 5-phospho-alpha-D-ribose 1-diphosphate binding.

The protein belongs to the UPRTase family. It depends on Mg(2+) as a cofactor.

It carries out the reaction UMP + diphosphate = 5-phospho-alpha-D-ribose 1-diphosphate + uracil. It functions in the pathway pyrimidine metabolism; UMP biosynthesis via salvage pathway; UMP from uracil: step 1/1. Its activity is regulated as follows. Allosterically activated by GTP. Catalyzes the conversion of uracil and 5-phospho-alpha-D-ribose 1-diphosphate (PRPP) to UMP and diphosphate. The chain is Uracil phosphoribosyltransferase from Burkholderia ambifaria (strain ATCC BAA-244 / DSM 16087 / CCUG 44356 / LMG 19182 / AMMD) (Burkholderia cepacia (strain AMMD)).